Here is a 97-residue protein sequence, read N- to C-terminus: Exodeoxyribonuclease 7 small subunit (97 aa).

A disordered region spans residues 1 to 21 (MAKTATPGACASDPGSGPLPE).

Belongs to the XseB family. In terms of assembly, heterooligomer composed of large and small subunits.

The protein localises to the cytoplasm. The enzyme catalyses Exonucleolytic cleavage in either 5'- to 3'- or 3'- to 5'-direction to yield nucleoside 5'-phosphates.. Its function is as follows. Bidirectionally degrades single-stranded DNA into large acid-insoluble oligonucleotides, which are then degraded further into small acid-soluble oligonucleotides. The protein is Exodeoxyribonuclease 7 small subunit of Burkholderia mallei (strain NCTC 10247).